The chain runs to 709 residues: Polyribonucleotide nucleotidyltransferase (709 aa).

Mg(2+)-binding residues include Asp-482 and Asp-488. Residues 549–608 (PRIITMSIDPDKIREVIGPGGKVINKIIAETGVKIDIEDDGRIFIAATDTEAANKAVRII) enclose the KH domain. Residues 618–686 (GKVYTGKVTR…KQGRINLSRK (69 aa)) enclose the S1 motif domain.

It belongs to the polyribonucleotide nucleotidyltransferase family. The cofactor is Mg(2+).

The protein localises to the cytoplasm. It carries out the reaction RNA(n+1) + phosphate = RNA(n) + a ribonucleoside 5'-diphosphate. Involved in mRNA degradation. Catalyzes the phosphorolysis of single-stranded polyribonucleotides processively in the 3'- to 5'-direction. The protein is Polyribonucleotide nucleotidyltransferase of Heliobacterium modesticaldum (strain ATCC 51547 / Ice1).